Consider the following 317-residue polypeptide: R2-like ligand binding oxidase (317 aa).

Positions 73, 106, and 109 each coordinate Mn(2+). Positions 76-167 form a cross-link, 3-(O4'-tyrosyl)-valine (Val-Tyr); sequence VTQDLQPFMA…ANQVRASVTY (92 aa). Glu-106 contributes to the Fe cation binding site. The Fe cation site is built by Glu-172, Glu-207, and His-210.

It belongs to the ribonucleoside diphosphate reductase small chain family. R2-like ligand binding oxidase subfamily. In terms of assembly, homodimer. The cofactor is Fe cation. It depends on Mn(2+) as a cofactor.

Its function is as follows. Probable oxidase. The protein is R2-like ligand binding oxidase of Saccharopolyspora erythraea (strain ATCC 11635 / DSM 40517 / JCM 4748 / NBRC 13426 / NCIMB 8594 / NRRL 2338).